A 429-amino-acid chain; its full sequence is E3 ubiquitin-protein ligase ZNRF4 (429 aa).

The N-terminal stretch at 1 to 27 (MPLCRPEHLMPRASRVPVAASLPLSHA) is a signal peptide. The Lumenal segment spans residues 28 to 250 (VIPTQLPSRP…PPCHDLGCHP (223 aa)). A disordered region spans residues 30-67 (PTQLPSRPGHRPPGRPRRCPKASCLPPPVGPSSTQTAK). Residues 37–49 (PGHRPPGRPRRCP) are compositionally biased toward basic residues. Residues asparagine 107, asparagine 152, and asparagine 229 are each glycosylated (N-linked (GlcNAc...) asparagine). Positions 151 to 223 (GNRSLGAIVL…VSEAASQDLR (73 aa)) constitute a PA domain. The chain crosses the membrane as a helical span at residues 251–271 (VLTVSWVLGCTLALVVSAFFV). Residues 272–429 (LNHLWLWAQA…SSAPPEAPGQ (158 aa)) lie on the Cytoplasmic side of the membrane. Residues 309 to 352 (CAICLDEYEEGDQLKILPCSHTYHCKCIDPWFSQAPRRSCPVCK) form an RING-type; atypical zinc finger.

In terms of assembly, interacts with CANX.

The protein localises to the endoplasmic reticulum membrane. The catalysed reaction is S-ubiquitinyl-[E2 ubiquitin-conjugating enzyme]-L-cysteine + [acceptor protein]-L-lysine = [E2 ubiquitin-conjugating enzyme]-L-cysteine + N(6)-ubiquitinyl-[acceptor protein]-L-lysine.. The protein operates within protein modification; protein ubiquitination. E3 ubiquitin-protein ligase that acts as a negative regulator of NOD2 signaling by mediating ubiquitination and degradation of RIPK2. Also catalyzes ubiquitination and proteasomal degradation of CANX within the endoplasmic reticulum. Could have a role in spermatogenesis. This is E3 ubiquitin-protein ligase ZNRF4 from Homo sapiens (Human).